A 147-amino-acid polypeptide reads, in one-letter code: Hemoglobin subunit gamma-1 (147 aa).

Residues 3-147 enclose the Globin domain; sequence NFTAEDKAAI…VASALGSRYH (145 aa). Thr-13 is modified (phosphothreonine). A phosphoserine mark is found at Ser-45, Ser-51, and Ser-53. The residue at position 60 (Lys-60) is an N6-acetyllysine. Heme b is bound at residue His-64. At Lys-83 the chain carries N6-acetyllysine. Residue His-93 participates in heme b binding. Cys-94 is subject to S-nitrosocysteine. Ser-140 carries the post-translational modification Phosphoserine.

This sequence belongs to the globin family. As to quaternary structure, heterotetramer of two alpha chains and two gamma chains in fetal hemoglobin (Hb F). In terms of tissue distribution, red blood cells.

Functionally, gamma chains make up the fetal hemoglobin F, in combination with alpha chains. The protein is Hemoglobin subunit gamma-1 (HBG1) of Plecturocebus moloch (Dusky titi monkey).